Reading from the N-terminus, the 387-residue chain is Chorismate synthase (387 aa).

Residues Arg39 and Arg45 each contribute to the NADP(+) site. Residues 130 to 132 (RSS), 251 to 252 (NA), Gly295, 310 to 314 (KPIPT), and Arg336 each bind FMN.

Belongs to the chorismate synthase family. As to quaternary structure, homotetramer. It depends on FMNH2 as a cofactor.

The catalysed reaction is 5-O-(1-carboxyvinyl)-3-phosphoshikimate = chorismate + phosphate. It functions in the pathway metabolic intermediate biosynthesis; chorismate biosynthesis; chorismate from D-erythrose 4-phosphate and phosphoenolpyruvate: step 7/7. In terms of biological role, catalyzes the anti-1,4-elimination of the C-3 phosphate and the C-6 proR hydrogen from 5-enolpyruvylshikimate-3-phosphate (EPSP) to yield chorismate, which is the branch point compound that serves as the starting substrate for the three terminal pathways of aromatic amino acid biosynthesis. This reaction introduces a second double bond into the aromatic ring system. This is Chorismate synthase from Exiguobacterium sp. (strain ATCC BAA-1283 / AT1b).